Here is a 316-residue protein sequence, read N- to C-terminus: BTB/POZ domain-containing adapter for CUL3-mediated RhoA degradation protein 2 (316 aa).

In terms of domain architecture, BTB spans lysine 28 to glutamine 96. The segment covering glutamate 268–proline 279 has biased composition (polar residues). The tract at residues glutamate 268–glutamate 287 is disordered. Serine 278 bears the Phosphoserine mark. At serine 280 the chain carries Phosphoserine; by CK2.

The protein belongs to the BACURD family. Component of the BCR(TNFAIP1) E3 ubiquitin ligase complex, at least composed of CUL3, TNFAIP1/BACURD2 and RBX1. Interacts with RHOA; with a preference for RhoA-GDP. Interacts with RHOB. Interacts with PCNA. Interacts with CSNK2B. Phosphorylation at Ser-280 by CK2 facilitates the nucleus localization and increases interaction with PCNA.

The protein localises to the cytoplasm. It localises to the nucleus. It is found in the endosome. It participates in protein modification; protein ubiquitination. Functionally, substrate-specific adapter of a BCR (BTB-CUL3-RBX1) E3 ubiquitin-protein ligase complex involved in regulation of cytoskeleton structure. The BCR(TNFAIP1) E3 ubiquitin ligase complex mediates the ubiquitination of RHOA, leading to its degradation by the proteasome, thereby regulating the actin cytoskeleton and cell migration. Its interaction with RHOB may regulate apoptosis. May enhance the PCNA-dependent DNA polymerase delta activity. In Homo sapiens (Human), this protein is BTB/POZ domain-containing adapter for CUL3-mediated RhoA degradation protein 2 (TNFAIP1).